Here is a 355-residue protein sequence, read N- to C-terminus: Peptide chain release factor 1 (355 aa).

The residue at position 233 (Gln-233) is an N5-methylglutamine.

The protein belongs to the prokaryotic/mitochondrial release factor family. Post-translationally, methylated by PrmC. Methylation increases the termination efficiency of RF1.

The protein localises to the cytoplasm. In terms of biological role, peptide chain release factor 1 directs the termination of translation in response to the peptide chain termination codons UAG and UAA. This chain is Peptide chain release factor 1, found in Caldicellulosiruptor saccharolyticus (strain ATCC 43494 / DSM 8903 / Tp8T 6331).